The primary structure comprises 211 residues: Bifunctional transcriptional activator/DNA repair enzyme AdaA (211 aa).

Cysteine 54 serves as the catalytic Nucleophile; methyl group acceptor from methylphosphotriester. Zn(2+) is bound by residues cysteine 54, cysteine 58, cysteine 85, and cysteine 88. An HTH araC/xylS-type domain is found at 102-200; it reads DLITEYIDKN…GQTPARFRQM (99 aa). A DNA-binding region (H-T-H motif) is located at residues 119–140; the sequence is ESLADICHGSPYHMHRTFKKIK.

Zn(2+) serves as cofactor.

It catalyses the reaction (2'-deoxyribonucleoside 5'-methylphosphotriester)-DNA + L-cysteinyl-[protein] = 2'-deoxyribonucleotide-DNA + S-methyl-L-cysteinyl-[protein] + H(+). In terms of biological role, is involved in the adaptive response to alkylation damage in DNA caused by alkylating agents. Repairs the methylphosphotriester lesions in DNA by a direct and irreversible transfer of the methyl group to one of its own cysteine residues. The methylation of AdaA by methylphosphotriesters in DNA leads to its activation as a transcriptional regulator that activates the transcription of the ada operon which consists of adaA and adaB, and of the adjacent gene alkA. This chain is Bifunctional transcriptional activator/DNA repair enzyme AdaA (adaA), found in Bacillus subtilis (strain 168).